Reading from the N-terminus, the 98-residue chain is Large ribosomal subunit protein uL23 (98 aa).

It belongs to the universal ribosomal protein uL23 family. In terms of assembly, part of the 50S ribosomal subunit. Contacts protein L29, and trigger factor when it is bound to the ribosome.

Functionally, one of the early assembly proteins it binds 23S rRNA. One of the proteins that surrounds the polypeptide exit tunnel on the outside of the ribosome. Forms the main docking site for trigger factor binding to the ribosome. The sequence is that of Large ribosomal subunit protein uL23 from Alcanivorax borkumensis (strain ATCC 700651 / DSM 11573 / NCIMB 13689 / SK2).